Here is a 192-residue protein sequence, read N- to C-terminus: Fe/S biogenesis protein NfuA (192 aa).

Positions 150 and 153 each coordinate [4Fe-4S] cluster.

The protein belongs to the NfuA family. In terms of assembly, homodimer. The cofactor is [4Fe-4S] cluster.

Its function is as follows. Involved in iron-sulfur cluster biogenesis. Binds a 4Fe-4S cluster, can transfer this cluster to apoproteins, and thereby intervenes in the maturation of Fe/S proteins. Could also act as a scaffold/chaperone for damaged Fe/S proteins. This Vesicomyosocius okutanii subsp. Calyptogena okutanii (strain HA) protein is Fe/S biogenesis protein NfuA.